The sequence spans 150 residues: Ribonuclease HI (150 aa).

The RNase H type-1 domain occupies 1–141 (MKSINAYTDG…VDVLARGQAM (141 aa)). Positions 9, 47, 69, and 133 each coordinate Mg(2+).

Belongs to the RNase H family. Monomer. Mg(2+) serves as cofactor.

It localises to the cytoplasm. It catalyses the reaction Endonucleolytic cleavage to 5'-phosphomonoester.. Endonuclease that specifically degrades the RNA of RNA-DNA hybrids. The sequence is that of Ribonuclease HI from Xylella fastidiosa (strain 9a5c).